The sequence spans 345 residues: L-threonine 3-dehydrogenase (345 aa).

Residue C42 coordinates Zn(2+). Catalysis depends on charge relay system residues T44 and H47. Zn(2+) is bound by residues H67, E68, C97, C100, C103, and C111. NAD(+) is bound by residues I179, D199, R204, 266-268 (LGI), and 290-291 (IY).

It belongs to the zinc-containing alcohol dehydrogenase family. As to quaternary structure, homotetramer. It depends on Zn(2+) as a cofactor.

Its subcellular location is the cytoplasm. It carries out the reaction L-threonine + NAD(+) = (2S)-2-amino-3-oxobutanoate + NADH + H(+). Its pathway is amino-acid degradation; L-threonine degradation via oxydo-reductase pathway; glycine from L-threonine: step 1/2. In terms of biological role, catalyzes the NAD(+)-dependent oxidation of L-threonine to 2-amino-3-ketobutyrate. This Sinorhizobium fredii (strain NBRC 101917 / NGR234) protein is L-threonine 3-dehydrogenase.